A 351-amino-acid polypeptide reads, in one-letter code: Methylthioribose-1-phosphate isomerase (351 aa).

Substrate contacts are provided by residues 51 to 53, arginine 94, and glutamine 199; that span reads RGA. The active-site Proton donor is aspartate 240. 250 to 251 contacts substrate; that stretch reads NK.

The protein belongs to the eIF-2B alpha/beta/delta subunits family. MtnA subfamily. As to quaternary structure, homodimer.

It catalyses the reaction 5-(methylsulfanyl)-alpha-D-ribose 1-phosphate = 5-(methylsulfanyl)-D-ribulose 1-phosphate. It participates in amino-acid biosynthesis; L-methionine biosynthesis via salvage pathway; L-methionine from S-methyl-5-thio-alpha-D-ribose 1-phosphate: step 1/6. In terms of biological role, catalyzes the interconversion of methylthioribose-1-phosphate (MTR-1-P) into methylthioribulose-1-phosphate (MTRu-1-P). The polypeptide is Methylthioribose-1-phosphate isomerase (Bacillus cereus (strain ATCC 10987 / NRS 248)).